We begin with the raw amino-acid sequence, 348 residues long: Anthranilate phosphoribosyltransferase (348 aa).

Residues G83, 86 to 87 (GD), T91, 93 to 96 (NVST), 111 to 119 (KHGNRAASS), and T123 each bind 5-phospho-alpha-D-ribose 1-diphosphate. G83 contacts anthranilate. S95 lines the Mg(2+) pocket. N114 serves as a coordination point for anthranilate. Position 169 (R169) interacts with anthranilate. Positions 227 and 228 each coordinate Mg(2+).

Belongs to the anthranilate phosphoribosyltransferase family. In terms of assembly, homodimer. Mg(2+) is required as a cofactor.

The enzyme catalyses N-(5-phospho-beta-D-ribosyl)anthranilate + diphosphate = 5-phospho-alpha-D-ribose 1-diphosphate + anthranilate. It functions in the pathway amino-acid biosynthesis; L-tryptophan biosynthesis; L-tryptophan from chorismate: step 2/5. Catalyzes the transfer of the phosphoribosyl group of 5-phosphorylribose-1-pyrophosphate (PRPP) to anthranilate to yield N-(5'-phosphoribosyl)-anthranilate (PRA). The polypeptide is Anthranilate phosphoribosyltransferase (Thermobifida fusca (strain YX)).